Here is a 184-residue protein sequence, read N- to C-terminus: MEILLLAFALAMDSVALSIASGAKCRTLSFLQVLKTALIFGVFQALMPFLGYILGLSFVNFIQEIDHFIAFGILGFLGAKMILEAHHTKDEPCLINLSSKDLALGAVATSIDALAVGITFSFANVDVTYSCLIIGTVCFVLCTAACYVGKILGAWLEAKALVLGGLILIGLGTKILITHLVDHI.

5 helical membrane passes run 39 to 59 (IFGVFQALMPFLGYILGLSFV), 65 to 85 (IDHFIAFGILGFLGAKMILEA), 102 to 122 (LALGAVATSIDALAVGITFSF), 132 to 152 (LIIGTVCFVLCTAACYVGKIL), and 161 to 181 (LVLGGLILIGLGTKILITHLV).

This sequence belongs to the MntP (TC 9.B.29) family.

It localises to the cell inner membrane. Probably functions as a manganese efflux pump. The polypeptide is Putative manganese efflux pump MntP (Campylobacter curvus (strain 525.92)).